Consider the following 358-residue polypeptide: MRARFGDRAPWLVETTLLRRRAAGKLGELCPNVGVSQWLFTDEALQQATAAPVARHRARRLAGRVVHDATCSIGTELAALRELAVRAVGSDIDPVRLAMARHNLAALGMEADLCRADVLHPVTRDAVVVIDPARRSNGRRRFHLADYQPGLGPLLDRYRGRDVVVKCAPGIDFEEVGRLGFEGEIEVISYRGGVREACLWSAGLAGSGIRRRASILDSGEQIGDDEPDDCGVRPAGKWIVDPDGAVVRAGLVRNYGARHGLWQLDPQIAYLSGDRLPPALRGFEVLEQLAFDERRLRQVLSALDCGAAEILVRGVAIDPDALRRRLRLRGSRPLAVVITRIGAGSLSHVTAYVCRPSR.

It belongs to the methyltransferase superfamily.

This is an uncharacterized protein from Mycobacterium tuberculosis (strain CDC 1551 / Oshkosh).